The chain runs to 365 residues: UDP-N-acetylglucosamine--N-acetylmuramyl-(pentapeptide) pyrophosphoryl-undecaprenol N-acetylglucosamine transferase (365 aa).

Residues 19 to 21 (TGG), asparagine 131, arginine 170, serine 201, isoleucine 255, 274 to 279 (ALTVTE), and glutamine 300 each bind UDP-N-acetyl-alpha-D-glucosamine.

The protein belongs to the glycosyltransferase 28 family. MurG subfamily.

It is found in the cell inner membrane. The catalysed reaction is di-trans,octa-cis-undecaprenyl diphospho-N-acetyl-alpha-D-muramoyl-L-alanyl-D-glutamyl-meso-2,6-diaminopimeloyl-D-alanyl-D-alanine + UDP-N-acetyl-alpha-D-glucosamine = di-trans,octa-cis-undecaprenyl diphospho-[N-acetyl-alpha-D-glucosaminyl-(1-&gt;4)]-N-acetyl-alpha-D-muramoyl-L-alanyl-D-glutamyl-meso-2,6-diaminopimeloyl-D-alanyl-D-alanine + UDP + H(+). The protein operates within cell wall biogenesis; peptidoglycan biosynthesis. Functionally, cell wall formation. Catalyzes the transfer of a GlcNAc subunit on undecaprenyl-pyrophosphoryl-MurNAc-pentapeptide (lipid intermediate I) to form undecaprenyl-pyrophosphoryl-MurNAc-(pentapeptide)GlcNAc (lipid intermediate II). This chain is UDP-N-acetylglucosamine--N-acetylmuramyl-(pentapeptide) pyrophosphoryl-undecaprenol N-acetylglucosamine transferase, found in Acinetobacter baumannii (strain SDF).